We begin with the raw amino-acid sequence, 688 residues long: Translation initiation factor IF-2 (688 aa).

Basic and acidic residues-rich tracts occupy residues 53–62 (GKEKSEKTKE) and 86–95 (KRDDKNEKVN). A disordered region spans residues 53 to 100 (GKEKSEKTKEEDDEIETTAKNPIKESMNNKKSNKRDDKNEKVNTENAE). Residues 187–354 (KRSPIITVMG…MILLSSEILE (168 aa)) enclose the tr-type G domain. The tract at residues 196–203 (GHVDHGKT) is G1. 196 to 203 (GHVDHGKT) contributes to the GTP binding site. The G2 stretch occupies residues 221 to 225 (GITQH). The tract at residues 242 to 245 (DTPG) is G3. GTP is bound by residues 242 to 246 (DTPGH) and 296 to 299 (NKID). Positions 296–299 (NKID) are G4. Residues 332-334 (SAH) are G5.

Belongs to the TRAFAC class translation factor GTPase superfamily. Classic translation factor GTPase family. IF-2 subfamily.

It localises to the cytoplasm. One of the essential components for the initiation of protein synthesis. Protects formylmethionyl-tRNA from spontaneous hydrolysis and promotes its binding to the 30S ribosomal subunits. Also involved in the hydrolysis of GTP during the formation of the 70S ribosomal complex. This is Translation initiation factor IF-2 from Clostridium botulinum (strain Loch Maree / Type A3).